A 273-amino-acid chain; its full sequence is Peptidoglycan-N-acetylglucosamine deacetylase BC_1974 (273 aa).

The helical transmembrane segment at 10 to 30 threads the bilayer; sequence IVVVLIAIAAVAIGYYMFQSI. A NodB homology domain is found at 69–255; the sequence is KVAYLTFDDG…GLKEKGYEFE (187 aa). The active-site Proton acceptor is the D76. Zn(2+) contacts are provided by D77, H126, and H130. The active-site Proton donor is the H230.

This sequence belongs to the polysaccharide deacetylase family. Zn(2+) is required as a cofactor. It depends on Co(2+) as a cofactor. Requires Ni(2+) as cofactor.

It is found in the cell membrane. It carries out the reaction peptidoglycan-N-acetyl-D-glucosamine + H2O = peptidoglycan-D-glucosamine + acetate.. With respect to regulation, inhibited by the hydroxamate N-hydroxy-4-(naphthalene-1-yl)benzamide (NHNB). Its function is as follows. Catalyzes the deacetylation of N-acetylglucosamine (GlcNAc) residues in peptidoglycan. The protein is Peptidoglycan-N-acetylglucosamine deacetylase BC_1974 of Bacillus cereus (strain ATCC 14579 / DSM 31 / CCUG 7414 / JCM 2152 / NBRC 15305 / NCIMB 9373 / NCTC 2599 / NRRL B-3711).